A 259-amino-acid chain; its full sequence is Ferritin-4, chloroplastic (259 aa).

Residues 1–57 (MLLKTVSSSSSSALSLVNFHGVKKDVSPLLPSISSNLRVSSGKSGNLTFSFRASKSS) constitute a chloroplast transit peptide. The extension peptide (EP) stretch occupies residues 58–90 (TTDALSGVVFEPFKEVKKELDLVPTSSHLSLAR). The 154-residue stretch at 91-244 (QKYSDECEAA…EYVAQLRRVG (154 aa)) folds into the Ferritin-like diiron domain. Positions 108, 143, 146, 192, and 226 each coordinate Fe cation.

The protein belongs to the ferritin family. Oligomer of 24 subunits. There are two types of subunits: L (light) chain and H (heavy) chain. The major chain can be light or heavy, depending on the species and tissue type. The functional molecule forms a roughly spherical shell with a diameter of 12 nm and contains a central cavity into which the insoluble mineral iron core is deposited.

It localises to the plastid. The protein resides in the chloroplast. It catalyses the reaction 4 Fe(2+) + O2 + 4 H(+) = 4 Fe(3+) + 2 H2O. Stores iron in a soluble, non-toxic, readily available form. Important for iron homeostasis. Has ferroxidase activity. Iron is taken up in the ferrous form and deposited as ferric hydroxides after oxidation. This is Ferritin-4, chloroplastic (FER4) from Arabidopsis thaliana (Mouse-ear cress).